Consider the following 132-residue polypeptide: Telomere bouquet protein 1 (132 aa).

In terms of assembly, interacts with bqt2 and sad1. The bqt1-bqt2-sad1 complex binds rap1.

The protein resides in the cytoplasm. The protein localises to the cytoskeleton. Its subcellular location is the microtubule organizing center. It localises to the spindle pole body. It is found in the chromosome. The protein resides in the telomere. Involved in chromosome segregation. During meiotic prophase, connects telomeres to the spindle pole body by forming a bridge between the telomere protein rap1 and the spindle pole body protein sad1. This chain is Telomere bouquet protein 1 (bqt1), found in Schizosaccharomyces pombe (strain 972 / ATCC 24843) (Fission yeast).